A 277-amino-acid chain; its full sequence is Caspase-3 (277 aa).

The residue at position 1 (methionine 1) is an N-acetylmethionine. Propeptides lie at residues 1–9 and 10–28; these read MENTENSVD and SKSI…QSMD. The span at 1–10 shows a compositional bias: polar residues; the sequence is MENTENSVDS. Positions 1–20 are disordered; sequence MENTENSVDSKSIKNLEPKI. Lysine 11 bears the N6-acetyllysine mark. Over residues 11–20 the composition is skewed to basic and acidic residues; the sequence is KSIKNLEPKI. A Phosphoserine modification is found at serine 26. Catalysis depends on residues histidine 121 and cysteine 163. Cysteine 163 bears the S-nitrosocysteine; in inhibited form mark.

It belongs to the peptidase C14A family. As to quaternary structure, heterotetramer that consists of two anti-parallel arranged heterodimers, each one formed by a 17 kDa (p17) and a 12 kDa (p12) subunit. Interacts with BIRC6/bruce. Post-translationally, cleavage by granzyme B, caspase-6, caspase-8 and caspase-10 generates the two active subunits. Additional processing of the propeptides is likely due to the autocatalytic activity of the activated protease. Active heterodimers between the small subunit of caspase-7 protease and the large subunit of caspase-3 also occur and vice versa. In terms of processing, S-nitrosylated on its catalytic site cysteine in unstimulated cell lines and denitrosylated upon activation of the Fas apoptotic pathway, associated with an increase in intracellular caspase activity. Fas therefore activates caspase-3 not only by inducing the cleavage of the caspase zymogen to its active subunits, but also by stimulating the denitrosylation of its active site thiol. Ubiquitinated by BIRC6; this activity is inhibited by DIABLO/SMAC.

The protein resides in the cytoplasm. It carries out the reaction Strict requirement for an Asp residue at positions P1 and P4. It has a preferred cleavage sequence of Asp-Xaa-Xaa-Asp-|- with a hydrophobic amino-acid residue at P2 and a hydrophilic amino-acid residue at P3, although Val or Ala are also accepted at this position.. Inhibited by BIRC6; following inhibition of BIRC6-caspase binding by DIABLO/SMAC, BIRC6 is subjected to caspase cleavage, leading to an increase in active caspases. Involved in the activation cascade of caspases responsible for apoptosis execution. At the onset of apoptosis, it proteolytically cleaves poly(ADP-ribose) polymerase PARP1 at a '216-Asp-|-Gly-217' bond. Cleaves and activates sterol regulatory element binding proteins (SREBPs) between the basic helix-loop-helix leucine zipper domain and the membrane attachment domain. Cleaves and activates caspase-6, -7 and -9 (CASP6, CASP7 and CASP9, respectively). Cleaves and inactivates interleukin-18 (IL18). Triggers cell adhesion in sympathetic neurons through RET cleavage. Cleaves IL-1 beta between an Asp and an Ala, releasing the mature cytokine which is involved in a variety of inflammatory processes. Cleaves and inhibits serine/threonine-protein kinase AKT1 in response to oxidative stress. Acts as an inhibitor of type I interferon production during virus-induced apoptosis by mediating cleavage of antiviral proteins CGAS, IRF3 and MAVS, thereby preventing cytokine overproduction. Also involved in pyroptosis by mediating cleavage and activation of gasdermin-E (GSDME). Cleaves XRCC4 and phospholipid scramblase proteins XKR4, XKR8 and XKR9, leading to promote phosphatidylserine exposure on apoptotic cell surface. Cleaves BIRC6 following inhibition of BIRC6-caspase binding by DIABLO/SMAC. This Pan troglodytes (Chimpanzee) protein is Caspase-3 (CASP3).